We begin with the raw amino-acid sequence, 908 residues long: DNA (cytosine-5)-methyltransferase 3A (908 aa).

Polar residues predominate over residues Met1–Ser13. Disordered stretches follow at residues Met1–Arg183 and Ser226–Glu281. Basic and acidic residues predominate over residues Leu14–Glu37. A compositionally biased stretch (basic residues) spans Lys44–His54. Positions Thr69–Gly80 are enriched in polar residues. A Phosphoserine modification is found at Ser102. The span at Gly110 to Ala124 shows a compositional bias: low complexity. Thr120 is modified (phosphothreonine). Lys158 is covalently cross-linked (Glycyl lysine isopeptide (Lys-Gly) (interchain with G-Cter in SUMO2)). Position 167 is an omega-N-methylarginine (Arg167). The interval Ser195–Asn399 is interaction with DNMT1 and DNMT3B. Phosphoserine is present on residues Ser239 and Ser251. Residues Ala242–Thr256 are compositionally biased toward polar residues. Residue Thr257 is modified to Phosphothreonine. One can recognise a PWWP domain in the interval Thr257–Ser315. The segment covering Ala265–Asp275 has biased composition (basic and acidic residues). A phosphoserine mark is found at Ser386 and Ser389. The tract at residues Ala443 to Lys462 is disordered. One can recognise an ADD domain in the interval Glu478–Asp610. The GATA-type; atypical zinc finger occupies Ile489–Glu519. The interval Cys490–Cys582 is interaction with the PRC2/EED-EZH2 complex. The segment at Gln530–Gly586 adopts a PHD-type; atypical zinc-finger fold. In terms of domain architecture, SAM-dependent MTase C5-type spans Ile630 to Val908. S-adenosyl-L-methionine-binding positions include Asp637–Thr641, Glu660, and Asp682–Arg684. Cys706 is an active-site residue. Cys706 is modified (S-methylcysteine; by autocatalysis). Arg887–Trp889 serves as a coordination point for S-adenosyl-L-methionine.

The protein belongs to the class I-like SAM-binding methyltransferase superfamily. C5-methyltransferase family. In terms of assembly, heterotetramer composed of 1 DNMT3A homodimer and 2 DNMT3L subunits (DNMT3L-DNMT3A-DNMT3A-DNMT3L). Interacts with DNMT1 and DNMT3B. Interacts with MPHOSPH8. Interacts with histone H3 that is not methylated at 'Lys-4' (H3K4). Binds the ZBTB18 transcriptional repressor. Interacts with SETDB1. Associates with HDAC1 through its ADD domain. Interacts with UHRF1. Interacts with the PRC2/EED-EZH2 complex. Interacts with UBC9, PIAS1 and PIAS2. Interacts with SPOCD1. Interacts with ZNF263; recruited to the SIX3 promoter along with other proteins involved in chromatin modification and transcriptional corepression where it contributes to transcriptional repression. Sumoylated; sumoylation disrupts the ability to interact with histone deacetylases (HDAC1 and HDAC2) and repress transcription. In terms of processing, auto-methylated at Cys-706: auto-methylation takes place in absence of DNA substrate and inactivates the DNA methyltransferase activity. Inactivation by auto-methylation may be used to inactivate unused DNA methyltransferases in the cell.

It localises to the nucleus. Its subcellular location is the chromosome. The protein resides in the cytoplasm. It catalyses the reaction a 2'-deoxycytidine in DNA + S-adenosyl-L-methionine = a 5-methyl-2'-deoxycytidine in DNA + S-adenosyl-L-homocysteine + H(+). The enzyme catalyses L-cysteinyl-[protein] + S-adenosyl-L-methionine = S-methyl-L-cysteinyl-[protein] + S-adenosyl-L-homocysteine + H(+). With respect to regulation, activated by binding to the regulatory factor DNMT3L. Auto-methylation at Cys-706 in absence of DNA inactivates the DNA methyltransferase activity. Required for genome-wide de novo methylation and is essential for the establishment of DNA methylation patterns during development. DNA methylation is coordinated with methylation of histones. It modifies DNA in a non-processive manner and also methylates non-CpG sites. May preferentially methylate DNA linker between 2 nucleosomal cores and is inhibited by histone H1. Plays a role in paternal and maternal imprinting. Required for methylation of most imprinted loci in germ cells. Acts as a transcriptional corepressor for ZBTB18. Recruited to trimethylated 'Lys-36' of histone H3 (H3K36me3) sites. Can actively repress transcription through the recruitment of HDAC activity. Also has weak auto-methylation activity on Cys-706 in absence of DNA. The protein is DNA (cytosine-5)-methyltransferase 3A (Dnmt3a) of Rattus norvegicus (Rat).